The primary structure comprises 293 residues: Ribosomal RNA small subunit methyltransferase H (293 aa).

S-adenosyl-L-methionine-binding positions include 32 to 34 (GGH), Asp51, Phe78, Asp99, and Gln106. The tract at residues 274 to 293 (DEIRENPASRSAKMRVARRL) is disordered.

Belongs to the methyltransferase superfamily. RsmH family.

The protein localises to the cytoplasm. The enzyme catalyses cytidine(1402) in 16S rRNA + S-adenosyl-L-methionine = N(4)-methylcytidine(1402) in 16S rRNA + S-adenosyl-L-homocysteine + H(+). Functionally, specifically methylates the N4 position of cytidine in position 1402 (C1402) of 16S rRNA. In Sulfurihydrogenibium azorense (strain DSM 15241 / OCM 825 / Az-Fu1), this protein is Ribosomal RNA small subunit methyltransferase H.